The sequence spans 263 residues: Purine nucleoside phosphorylase SERP0752 (263 aa).

3 residues coordinate Zn(2+): His-79, Cys-124, and His-141.

Belongs to the purine nucleoside phosphorylase YfiH/LACC1 family. Homodimer. The cofactor is Cu(2+). Zn(2+) is required as a cofactor.

It catalyses the reaction adenosine + phosphate = alpha-D-ribose 1-phosphate + adenine. The enzyme catalyses S-methyl-5'-thioadenosine + phosphate = 5-(methylsulfanyl)-alpha-D-ribose 1-phosphate + adenine. It carries out the reaction inosine + phosphate = alpha-D-ribose 1-phosphate + hypoxanthine. The catalysed reaction is adenosine + H2O + H(+) = inosine + NH4(+). Functionally, purine nucleoside enzyme that catalyzes the phosphorolysis of adenosine and inosine nucleosides, yielding D-ribose 1-phosphate and the respective free bases, adenine and hypoxanthine. Also catalyzes the phosphorolysis of S-methyl-5'-thioadenosine into adenine and S-methyl-5-thio-alpha-D-ribose 1-phosphate. Also has adenosine deaminase activity. In Staphylococcus epidermidis (strain ATCC 35984 / DSM 28319 / BCRC 17069 / CCUG 31568 / BM 3577 / RP62A), this protein is Purine nucleoside phosphorylase SERP0752.